Here is a 478-residue protein sequence, read N- to C-terminus: NAD(+) hydrolase ThsA (478 aa).

The Deacetylase sirtuin-type domain occupies 1–287 (MDKKVLIKRF…SIRKKYLRKT (287 aa)). NAD(+) is bound by residues Ala-19, Asp-110, and His-148. The active-site Proton acceptor is the His-148. Residues 288-478 (IFISGSAVDY…VSLINSIQED (191 aa)) are SLOG (STALD) domain. 3'cADPR contacts are provided by Gly-292, Ser-293, Leu-330, Arg-373, Lys-390, Gly-401, and Glu-405.

It belongs to the soluble Thoeris ThsA family. In terms of assembly, homotetramer in solution.

The enzyme catalyses NAD(+) + H2O = ADP-D-ribose + nicotinamide + H(+). Activated by 3'cADPR. NAD(+) hydrolyzing component (NADase) of the Thoeris antiviral defense system, composed of ThsA and ThsB (maybe AS248_15445). Activated by 3' cyclic ADP-D-ribose (3'cADPR) but not its isomers 2'cADPR, cADPR and very weakly by ADPR; binds 3'cADPR better than 2'cADPR. Upon activation binds and hydrolyzes NAD(+), leading to cell death and inhibition of phage replication. In Enterococcus faecium (Streptococcus faecium), this protein is NAD(+) hydrolase ThsA.